The sequence spans 232 residues: N-(5'-phosphoribosyl)anthranilate isomerase (232 aa).

This sequence belongs to the TrpF family.

The catalysed reaction is N-(5-phospho-beta-D-ribosyl)anthranilate = 1-(2-carboxyphenylamino)-1-deoxy-D-ribulose 5-phosphate. The protein operates within amino-acid biosynthesis; L-tryptophan biosynthesis; L-tryptophan from chorismate: step 3/5. The sequence is that of N-(5'-phosphoribosyl)anthranilate isomerase (TRP1) from Lipomyces starkeyi (Oleaginous yeast).